The chain runs to 120 residues: Large ribosomal subunit protein uL18 (120 aa).

This sequence belongs to the universal ribosomal protein uL18 family. As to quaternary structure, part of the 50S ribosomal subunit; part of the 5S rRNA/L5/L18/L25 subcomplex. Contacts the 5S and 23S rRNAs.

In terms of biological role, this is one of the proteins that bind and probably mediate the attachment of the 5S RNA into the large ribosomal subunit, where it forms part of the central protuberance. This chain is Large ribosomal subunit protein uL18, found in Halalkalibacterium halodurans (strain ATCC BAA-125 / DSM 18197 / FERM 7344 / JCM 9153 / C-125) (Bacillus halodurans).